A 471-amino-acid chain; its full sequence is GTPase Der (471 aa).

2 consecutive EngA-type G domains span residues 5–168 (PVIA…TDLE) and 186–359 (IRVA…DSAF). GTP contacts are provided by residues 11–18 (GRPNVGKS), 58–62 (DTGGI), 120–123 (NKTD), 192–199 (GRPNVGKS), 239–243 (DTAGV), and 304–307 (NKWD). In terms of domain architecture, KH-like spans 360-444 (IKIGTNELTR…PIRLEFKSGT (85 aa)).

The protein belongs to the TRAFAC class TrmE-Era-EngA-EngB-Septin-like GTPase superfamily. EngA (Der) GTPase family. In terms of assembly, associates with the 50S ribosomal subunit.

In terms of biological role, GTPase that plays an essential role in the late steps of ribosome biogenesis. This is GTPase Der from Alcanivorax borkumensis (strain ATCC 700651 / DSM 11573 / NCIMB 13689 / SK2).